The sequence spans 564 residues: Interactor of constitutive active ROPs 3 (564 aa).

Disordered stretches follow at residues 1–73 (MQTQ…SRIT) and 88–135 (KAKD…SALE). Residues 33-44 (ESSSSPISATNR) show a composition bias toward polar residues. Basic and acidic residues-rich tracts occupy residues 63–73 (VSEKKRPSRIT) and 98–123 (TSKKQAEQEAEESRKQLQEVSSKLEE). Coiled-coil stretches lie at residues 70-133 (SRIT…ETSA) and 231-514 (AETE…AATA). At serine 533 the chain carries Phosphoserine.

It belongs to the ICR family. As to quaternary structure, interacts with ARAC11 in vitro. As to expression, expressed in flowers.

In terms of biological role, acts as a scaffold, mediating interaction of ROPs with different proteins. This Arabidopsis thaliana (Mouse-ear cress) protein is Interactor of constitutive active ROPs 3 (ICR3).